The following is a 290-amino-acid chain: Porphobilinogen deaminase (290 aa).

The residue at position 237 (Cys-237) is an S-(dipyrrolylmethanemethyl)cysteine.

It belongs to the HMBS family. Monomer. Dipyrromethane serves as cofactor.

It catalyses the reaction 4 porphobilinogen + H2O = hydroxymethylbilane + 4 NH4(+). The protein operates within porphyrin-containing compound metabolism; protoporphyrin-IX biosynthesis; coproporphyrinogen-III from 5-aminolevulinate: step 2/4. Tetrapolymerization of the monopyrrole PBG into the hydroxymethylbilane pre-uroporphyrinogen in several discrete steps. This chain is Porphobilinogen deaminase, found in Clostridium botulinum (strain ATCC 19397 / Type A).